The following is a 1410-amino-acid chain: DNA-directed RNA polymerase subunit beta' (1410 aa).

Residues Cys-70, Cys-72, Cys-85, and Cys-88 each contribute to the Zn(2+) site. Positions 460, 462, and 464 each coordinate Mg(2+). Residues Cys-814, Cys-888, Cys-895, and Cys-898 each contribute to the Zn(2+) site.

It belongs to the RNA polymerase beta' chain family. The RNAP catalytic core consists of 2 alpha, 1 beta, 1 beta' and 1 omega subunit. When a sigma factor is associated with the core the holoenzyme is formed, which can initiate transcription. Requires Mg(2+) as cofactor. The cofactor is Zn(2+).

The catalysed reaction is RNA(n) + a ribonucleoside 5'-triphosphate = RNA(n+1) + diphosphate. DNA-dependent RNA polymerase catalyzes the transcription of DNA into RNA using the four ribonucleoside triphosphates as substrates. This is DNA-directed RNA polymerase subunit beta' from Saccharophagus degradans (strain 2-40 / ATCC 43961 / DSM 17024).